We begin with the raw amino-acid sequence, 384 residues long: MKPHFRNPVERMYQDTFSDNFYNRPILSRRNTVWLCYEVKTKGPSRPPLDAKIFRGQVYSKLKYHPEMRFFHWFSKWRKLHRDQEYEVTWYISWSPCTKCTRDVATFLAEDPKVTLTIFVARLYYFWDPDYQEALRSLCQKRDGPRATMKIMNYDEFQHCWSKFVYSQRELFEPWNNLPKYYILLHIMLGEILRHSMDPPTFTSNFNNELWVRGRHETYLCYEVERLHNDTRVLLNQRRGFLCNQAPHKHGFLEGRHAELCFLDVIPFWKLDLHQDYRVTCFTSWSPCFSCAQEMAKFISNNKHVSLCIFAARIYDDQGRCQEGLRTLAKAGAEISIMTYSEFKHCWDTFVDHQGCPFQPWDGLEEHSQALSGRLRAILQNQGN.

The interval 1–60 (MKPHFRNPVERMYQDTFSDNFYNRPILSRRNTVWLCYEVKTKGPSRPPLDAKIFRGQVYS) is essential for cytoplasmic localization. CMP/dCMP-type deaminase domains lie at 29–138 (RRNT…LRSL) and 214–328 (GRHE…LRTL). Position 32 is a phosphothreonine; by PKA (threonine 32). Zn(2+) is bound by residues histidine 65, cysteine 97, and cysteine 100. The necessary for homooligomerization stretch occupies residues 209–336 (ELWVRGRHET…TLAKAGAEIS (128 aa)). The tract at residues 213–215 (RGR) is interaction with DNA. Threonine 218 carries the phosphothreonine; by PKA and CAMK2 modification. Histidine 257 is a binding site for Zn(2+). The active-site Proton donor is glutamate 259. Residues cysteine 288 and cysteine 291 each coordinate Zn(2+). Residues 313 to 320 (RIYDDQGR) form an interaction with DNA region.

This sequence belongs to the cytidine and deoxycytidylate deaminase family. As to quaternary structure, homodimer. Homooligomer. Can bind RNA to form ribonucleoprotein complexes of high-molecular-mass (HMM) or low-molecular-mass (LMM). HMM is inactive and heterogeneous in protein composition because of binding nonselectively to cellular RNAs, which in turn are associated with variety of cellular proteins. The LMM form which is enzymatically active has few or no RNAs associated. Its ability to form homooligomer is distinct from its ability to assemble into HMM. Interacts with APOBEC3B, APOBEC3F, MOV10, AGO2, EIF4E, EIF4ENIF1, DCP2 and DDX6 in an RNA-dependent manner. Interacts with AGO1, AGO3 and PKA/PRKACA. It depends on Zn(2+) as a cofactor.

Its subcellular location is the cytoplasm. The protein localises to the nucleus. The protein resides in the P-body. The catalysed reaction is a 2'-deoxycytidine in single-stranded DNA + H2O + H(+) = a 2'-deoxyuridine in single-stranded DNA + NH4(+). DNA deaminase (cytidine deaminase) which acts as an inhibitor of retrovirus replication and retrotransposon mobility via deaminase-dependent and -independent mechanisms. After the penetration of retroviral nucleocapsids into target cells of infection and the initiation of reverse transcription, it can induce the conversion of cytosine to uracil in the minus-sense single-strand viral DNA, leading to G-to-A hypermutations in the subsequent plus-strand viral DNA. The resultant detrimental levels of mutations in the proviral genome, along with a deamination-independent mechanism that works prior to the proviral integration, together exert efficient antiretroviral effects in infected target cells. Selectively targets single-stranded DNA and does not deaminate double-stranded DNA or single- or double-stranded RNA. May inhibit the mobility of LTR retrotransposons. This is DNA dC-&gt;dU-editing enzyme APOBEC-3G (APOBEC3G) from Pan paniscus (Pygmy chimpanzee).